We begin with the raw amino-acid sequence, 487 residues long: GTPase Der (487 aa).

EngA-type G domains follow at residues 3–166 (PVIA…IAEL) and 201–374 (VKLA…ESAT). GTP-binding positions include 9 to 16 (GRPNVGKS), 56 to 60 (DTGGI), 118 to 121 (NKTD), 207 to 214 (GRPNVGKS), 254 to 258 (DTAGV), and 319 to 322 (NKWD). A KH-like domain is found at 375–459 (KRISTAMLRR…PIKIEFREGD (85 aa)).

The protein belongs to the TRAFAC class TrmE-Era-EngA-EngB-Septin-like GTPase superfamily. EngA (Der) GTPase family. In terms of assembly, associates with the 50S ribosomal subunit.

GTPase that plays an essential role in the late steps of ribosome biogenesis. The polypeptide is GTPase Der (Pseudoalteromonas translucida (strain TAC 125)).